Here is a 548-residue protein sequence, read N- to C-terminus: Leucine-rich repeat LGI family member 3 (548 aa).

An N-terminal signal peptide occupies residues Met-1–Ala-30. In terms of domain architecture, LRRNT spans Lys-31 to Ser-64. LRR repeat units lie at residues Leu-89–Gly-110, His-113–Gly-134, and Ser-137–Pro-158. Residues Asn-170–Thr-220 enclose the LRRCT domain. Residue Asn-189 is glycosylated (N-linked (GlcNAc...) asparagine). EAR repeat units lie at residues Asp-222 to Tyr-264 and Gln-268 to Pro-310. Asn-311 carries N-linked (GlcNAc...) asparagine glycosylation. 5 EAR repeats span residues Arg-314–Gln-361, Gly-363–Arg-406, Gln-410–Gly-453, Arg-455–Glu-497, and Lys-501–Val-543.

In terms of assembly, interacts with STX1A. Brain.

The protein localises to the secreted. Its subcellular location is the cytoplasmic vesicle. It is found in the secretory vesicle. The protein resides in the synaptic vesicle. It localises to the synapse. The protein localises to the synaptosome. Its subcellular location is the cell projection. It is found in the axon. May participate in the regulation of neuronal exocytosis. The sequence is that of Leucine-rich repeat LGI family member 3 (Lgi3) from Mus musculus (Mouse).